The following is a 130-amino-acid chain: Riboflavin kinase (130 aa).

Residue 10–15 (GFGEGK) participates in CDP binding. Mg(2+)-binding residues include T39 and N41. FMN is bound by residues T96 and E104. CDP is bound at residue 109–112 (VNLR).

It belongs to the archaeal riboflavin kinase family. The cofactor is Mg(2+).

The enzyme catalyses riboflavin + CTP = CDP + FMN + H(+). Its pathway is cofactor biosynthesis; FMN biosynthesis; FMN from riboflavin (CTP route): step 1/1. Its function is as follows. Catalyzes the CTP-dependent phosphorylation of riboflavin (vitamin B2) to form flavin mononucleotide (FMN). This is Riboflavin kinase from Methanococcus vannielii (strain ATCC 35089 / DSM 1224 / JCM 13029 / OCM 148 / SB).